The following is a 295-amino-acid chain: Putative nudix hydrolase 7 (295 aa).

The region spanning 9–182 is the Nudix hydrolase domain; it reads SWRSAASIIL…KYALPPPQVY (174 aa). Residues 52–73 carry the Nudix box motif; that stretch reads TDAKLGDEFRIAAVRELFEESG. E67 and E71 together coordinate Mg(2+).

This sequence belongs to the Nudix hydrolase family. Mg(2+) serves as cofactor. The cofactor is Mn(2+).

Probably mediates the hydrolysis of some nucleoside diphosphate derivatives. This Caenorhabditis elegans protein is Putative nudix hydrolase 7 (ndx-7).